Reading from the N-terminus, the 179-residue chain is Large ribosomal subunit protein uL5 (179 aa).

This sequence belongs to the universal ribosomal protein uL5 family. In terms of assembly, part of the 50S ribosomal subunit; part of the 5S rRNA/L5/L18/L25 subcomplex. Contacts the 5S rRNA and the P site tRNA. Forms a bridge to the 30S subunit in the 70S ribosome.

In terms of biological role, this is one of the proteins that bind and probably mediate the attachment of the 5S RNA into the large ribosomal subunit, where it forms part of the central protuberance. In the 70S ribosome it contacts protein S13 of the 30S subunit (bridge B1b), connecting the 2 subunits; this bridge is implicated in subunit movement. Contacts the P site tRNA; the 5S rRNA and some of its associated proteins might help stabilize positioning of ribosome-bound tRNAs. The protein is Large ribosomal subunit protein uL5 of Geotalea uraniireducens (strain Rf4) (Geobacter uraniireducens).